Reading from the N-terminus, the 89-residue chain is Small ribosomal subunit protein uS15 (89 aa).

It belongs to the universal ribosomal protein uS15 family. In terms of assembly, part of the 30S ribosomal subunit. Forms a bridge to the 50S subunit in the 70S ribosome, contacting the 23S rRNA.

In terms of biological role, one of the primary rRNA binding proteins, it binds directly to 16S rRNA where it helps nucleate assembly of the platform of the 30S subunit by binding and bridging several RNA helices of the 16S rRNA. Functionally, forms an intersubunit bridge (bridge B4) with the 23S rRNA of the 50S subunit in the ribosome. This Tolumonas auensis (strain DSM 9187 / NBRC 110442 / TA 4) protein is Small ribosomal subunit protein uS15.